The following is a 263-amino-acid chain: Putative methyltransferase DDB_G0268948 (263 aa).

The protein belongs to the methyltransferase superfamily.

The chain is Putative methyltransferase DDB_G0268948 from Dictyostelium discoideum (Social amoeba).